Consider the following 546-residue polypeptide: Chaperonin GroEL 3 (546 aa).

ATP is bound by residues 30–33 (TLGP), K51, 87–91 (DGTTT), G415, and D496.

Belongs to the chaperonin (HSP60) family. Forms a cylinder of 14 subunits composed of two heptameric rings stacked back-to-back. Interacts with the co-chaperonin GroES.

The protein resides in the cytoplasm. The enzyme catalyses ATP + H2O + a folded polypeptide = ADP + phosphate + an unfolded polypeptide.. Its function is as follows. Together with its co-chaperonin GroES, plays an essential role in assisting protein folding. The GroEL-GroES system forms a nano-cage that allows encapsulation of the non-native substrate proteins and provides a physical environment optimized to promote and accelerate protein folding. In Bradyrhizobium diazoefficiens (strain JCM 10833 / BCRC 13528 / IAM 13628 / NBRC 14792 / USDA 110), this protein is Chaperonin GroEL 3.